We begin with the raw amino-acid sequence, 317 residues long: Methionyl-tRNA formyltransferase (317 aa).

(6S)-5,6,7,8-tetrahydrofolate is bound at residue 112-115; sequence SLLP.

The protein belongs to the Fmt family.

The catalysed reaction is L-methionyl-tRNA(fMet) + (6R)-10-formyltetrahydrofolate = N-formyl-L-methionyl-tRNA(fMet) + (6S)-5,6,7,8-tetrahydrofolate + H(+). Its function is as follows. Attaches a formyl group to the free amino group of methionyl-tRNA(fMet). The formyl group appears to play a dual role in the initiator identity of N-formylmethionyl-tRNA by promoting its recognition by IF2 and preventing the misappropriation of this tRNA by the elongation apparatus. The polypeptide is Methionyl-tRNA formyltransferase (Mycoplasma capricolum subsp. capricolum (strain California kid / ATCC 27343 / NCTC 10154)).